We begin with the raw amino-acid sequence, 262 residues long: 3-deoxy-manno-octulosonate cytidylyltransferase (262 aa).

This sequence belongs to the KdsB family.

Its subcellular location is the cytoplasm. It carries out the reaction 3-deoxy-alpha-D-manno-oct-2-ulosonate + CTP = CMP-3-deoxy-beta-D-manno-octulosonate + diphosphate. The protein operates within nucleotide-sugar biosynthesis; CMP-3-deoxy-D-manno-octulosonate biosynthesis; CMP-3-deoxy-D-manno-octulosonate from 3-deoxy-D-manno-octulosonate and CTP: step 1/1. It participates in bacterial outer membrane biogenesis; lipopolysaccharide biosynthesis. Its function is as follows. Activates KDO (a required 8-carbon sugar) for incorporation into bacterial lipopolysaccharide in Gram-negative bacteria. In Koribacter versatilis (strain Ellin345), this protein is 3-deoxy-manno-octulosonate cytidylyltransferase.